The sequence spans 369 residues: Methionine import ATP-binding protein MetN (369 aa).

The ABC transporter domain occupies 31–266; it reads VEMKDVRRMF…PQSPVTQSML (236 aa). 63–70 lines the ATP pocket; the sequence is GRSGAGKS.

Belongs to the ABC transporter superfamily. Methionine importer (TC 3.A.1.24) family. The complex is composed of two ATP-binding proteins (MetN), two transmembrane proteins (MetI) and a solute-binding protein (MetQ).

The protein resides in the cell inner membrane. It carries out the reaction L-methionine(out) + ATP + H2O = L-methionine(in) + ADP + phosphate + H(+). It catalyses the reaction D-methionine(out) + ATP + H2O = D-methionine(in) + ADP + phosphate + H(+). Part of the ABC transporter complex MetNIQ involved in methionine import. Responsible for energy coupling to the transport system. The polypeptide is Methionine import ATP-binding protein MetN (Brucella abortus (strain 2308)).